The primary structure comprises 516 residues: L-amino-acid oxidase (516 aa).

An N-terminal signal peptide occupies residues M1–C18. C28 and C189 form a disulfide bridge. FAD contacts are provided by residues M61 to S62, E81 to A82, R89, and G103 to R106. Substrate is bound by residues R106 and H239. V279 provides a ligand contact to FAD. C349 and C430 form a disulfide bridge. The N-linked (GlcNAc...) asparagine glycan is linked to N379. Y390 is a substrate binding site. FAD contacts are provided by residues E475 and G482 to T487. A substrate-binding site is contributed by G482 to W483.

Belongs to the flavin monoamine oxidase family. FIG1 subfamily. As to quaternary structure, homodimer; non-covalently linked. FAD is required as a cofactor. Post-translationally, N-glycosylated. Expressed by the venom gland.

The protein localises to the secreted. It catalyses the reaction an L-alpha-amino acid + O2 + H2O = a 2-oxocarboxylate + H2O2 + NH4(+). Catalyzes an oxidative deamination of predominantly hydrophobic and aromatic L-amino acids, thus producing hydrogen peroxide that may contribute to the diverse toxic effects of this enzyme. Exhibits diverse biological activities, such as hemorrhage, hemolysis, edema, apoptosis of vascular endothelial cells or tumor cell lines, antibacterial and antiparasitic activities, as well as regulation of platelet aggregation. Effects of snake L-amino oxidases on platelets are controversial, since they either induce aggregation or inhibit agonist-induced aggregation. These different effects are probably due to different experimental conditions. In Sistrurus catenatus edwardsii (Desert massasauga), this protein is L-amino-acid oxidase.